The primary structure comprises 572 residues: Transmembrane glycoprotein NMB (572 aa).

Positions 1–22 (MESLCGVLVFLLLAAGLPLQAA) are cleaved as a signal peptide. Residues 23–500 (KRFRDVLGHE…DLGSPLRTVN (478 aa)) lie on the Extracellular side of the membrane. N-linked (GlcNAc...) asparagine glycosylation is found at N93, N134, N200, N249, N275, N296, N300, N306, and N312. The PKD domain occupies 251–338 (SDETFLRDLP…SPSSSTSPSP (88 aa)). A disordered region spans residues 321–359 (GPCPSPTPSPSSSTSPSPASSPSPTLSTPSPSLMPTGHK). Residues 330 to 356 (PSSSTSPSPASSPSPTLSTPSPSLMPT) show a composition bias toward low complexity. N-linked (GlcNAc...) asparagine glycosylation is found at N461 and N469. A helical transmembrane segment spans residues 501 to 521 (GVLISIGCLAMFVTMVTILLY). At 522–572 (KKHKTYKPIGNCTRNVVKGKGLSVFLSHAKAPFSRGDREKDPLLQDKPWML) the chain is on the cytoplasmic side. Position 544 is a phosphoserine (S544). The Cell attachment site motif lies at 556–558 (RGD).

Belongs to the PMEL/NMB family.

It is found in the cell membrane. It localises to the melanosome membrane. The protein localises to the early endosome membrane. In terms of biological role, could be a melanogenic enzyme. The polypeptide is Transmembrane glycoprotein NMB (Gpnmb) (Rattus norvegicus (Rat)).